Reading from the N-terminus, the 333-residue chain is Nucleoid-associated protein APJL_0454 (333 aa).

Belongs to the YejK family.

The protein resides in the cytoplasm. Its subcellular location is the nucleoid. This is Nucleoid-associated protein APJL_0454 from Actinobacillus pleuropneumoniae serotype 3 (strain JL03).